Reading from the N-terminus, the 319-residue chain is Cytochrome f (319 aa).

Residues 1-35 (MQNRNISYWIKKCVIQSISIVILMKIIAWPSISEA) form the signal peptide. Heme contacts are provided by Tyr36, Cys56, Cys59, and His60. Residues 285-305 (VQSLLVFFVSVTLAQIFLVLK) traverse the membrane as a helical segment.

Belongs to the cytochrome f family. As to quaternary structure, the 4 large subunits of the cytochrome b6-f complex are cytochrome b6, subunit IV (17 kDa polypeptide, petD), cytochrome f and the Rieske protein, while the 4 small subunits are PetG, PetL, PetM and PetN. The complex functions as a dimer. Requires heme as cofactor.

The protein localises to the plastid. It localises to the chloroplast thylakoid membrane. Its function is as follows. Component of the cytochrome b6-f complex, which mediates electron transfer between photosystem II (PSII) and photosystem I (PSI), cyclic electron flow around PSI, and state transitions. The polypeptide is Cytochrome f (Physcomitrium patens (Spreading-leaved earth moss)).